The sequence spans 364 residues: MACSLSFSSSVSTFHLPTTTQSTQAPPNNATTLPTTNPIQCANLRELRDRIGSVKNTQKITEAMKLVAAAKVRRAQEAVVNGRPFSETLVEVLYNMNEQLQTEDVDVPLTKIRTVKKVALMVVTGDRGLCGGFNNMLLKKAESRIAELKKLGVDYTIISIGKKGNTYFIRRPEIPVDRYFDGTNLPTAKEAQAIADDVFSLFVSEEVDKVEMLYTKFVSLVKSDPVIHTLLPLSPKGEICDINGKCVDAAEDELFRLTTKEGKLTVERDMIKTETPAFSPILEFEQDPAQILDALLPLYLNSQILRALQESLASELAARMTAMSNATDNANELKKTLSINYNRARQAKITGEILEIVAGANACV.

A chloroplast-targeting transit peptide spans 1 to 41 (MACSLSFSSSVSTFHLPTTTQSTQAPPNNATTLPTTNPIQC). Residues 17 to 36 (PTTTQSTQAPPNNATTLPTT) form a disordered region. Low complexity predominate over residues 25–36 (APPNNATTLPTT). The active site involves C130. A disulfide bridge links C240 with C246.

The protein belongs to the ATPase gamma chain family. In terms of assembly, F-type ATPases have 2 components, CF(1) - the catalytic core - and CF(0) - the membrane proton channel. CF(1) has five subunits: alpha(3), beta(3), gamma(1), delta(1), epsilon(1). CF(0) has four main subunits: a, b, b' and c. In terms of processing, disulfide bond; Cys-240 and Cys-246 are known to form a disulfide bridge in the dark which gives rise to an inactive enzyme. Activation can be brought about by a ferredoxin-dependent reduction of the disulfide bond in the light.

It localises to the plastid. The protein localises to the chloroplast thylakoid membrane. In terms of biological role, produces ATP from ADP in the presence of a proton gradient across the membrane. The gamma chain is believed to be important in regulating ATPase activity and the flow of protons through the CF(0) complex. In Spinacia oleracea (Spinach), this protein is ATP synthase gamma chain, chloroplastic (ATPC).